We begin with the raw amino-acid sequence, 154 residues long: 6,7-dimethyl-8-ribityllumazine synthase (154 aa).

Residues 22–23 (FN), 56–58 (SWE), and 80–82 (VLI) contribute to the 5-amino-6-(D-ribitylamino)uracil site. 85–86 (AT) is a (2S)-2-hydroxy-3-oxobutyl phosphate binding site. His88 acts as the Proton donor in catalysis. Residue Phe113 participates in 5-amino-6-(D-ribitylamino)uracil binding. A (2S)-2-hydroxy-3-oxobutyl phosphate-binding site is contributed by Arg127. Lys135 serves as a coordination point for 5-amino-6-(D-ribitylamino)uracil.

This sequence belongs to the DMRL synthase family. Forms an icosahedral capsid composed of 60 subunits, arranged as a dodecamer of pentamers.

It catalyses the reaction (2S)-2-hydroxy-3-oxobutyl phosphate + 5-amino-6-(D-ribitylamino)uracil = 6,7-dimethyl-8-(1-D-ribityl)lumazine + phosphate + 2 H2O + H(+). Its pathway is cofactor biosynthesis; riboflavin biosynthesis; riboflavin from 2-hydroxy-3-oxobutyl phosphate and 5-amino-6-(D-ribitylamino)uracil: step 1/2. Functionally, catalyzes the formation of 6,7-dimethyl-8-ribityllumazine by condensation of 5-amino-6-(D-ribitylamino)uracil with 3,4-dihydroxy-2-butanone 4-phosphate. This is the penultimate step in the biosynthesis of riboflavin. The sequence is that of 6,7-dimethyl-8-ribityllumazine synthase (ribH) from Aquifex aeolicus (strain VF5).